Reading from the N-terminus, the 178-residue chain is Caveolin-1 (178 aa).

Ser-2 is subject to N-acetylserine. Ser-2 is modified (phosphoserine). The interval 2–94 is required for homooligomerization; it reads SGGKYVDSEG…WKASFTTFTV (93 aa). Residues 2–104 are Cytoplasmic-facing; sequence SGGKYVDSEG…TKYWFYRLLS (103 aa). Lys-5 bears the N6-acetyllysine; alternate mark. A Glycyl lysine isopeptide (Lys-Gly) (interchain with G-Cter in ubiquitin); alternate cross-link involves residue Lys-5. Tyr-6 carries the post-translational modification Phosphotyrosine. The residue at position 9 (Ser-9) is a Phosphoserine. Position 14 is a phosphotyrosine; by ABL1 (Tyr-14). Position 25 is a phosphotyrosine (Tyr-25). Residues Lys-26 and Lys-30 each participate in a glycyl lysine isopeptide (Lys-Gly) (interchain with G-Cter in ubiquitin) cross-link. Residue Ser-37 is modified to Phosphoserine. Residues Lys-39, Lys-47, and Lys-57 each participate in a glycyl lysine isopeptide (Lys-Gly) (interchain with G-Cter in ubiquitin) cross-link. The interaction with CAVIN3 stretch occupies residues 82 to 94; it reads DGIWKASFTTFTV. Residues 105–125 constitute an intramembrane region (helical); sequence ALFGIPMALIWGIYFAILSFL. Over 126–178 the chain is Cytoplasmic; sequence HIWAVVPCIKSFLIEIQCISRVYSIYVHTFCDPFFEAVGKIFSNIRINMQKET. The tract at residues 131–142 is interacts with SPRY1, SPRY2, SPRY3 and SPRY4; that stretch reads VPCIKSFLIEIQ. Residues Cys-133, Cys-143, and Cys-156 are each lipidated (S-palmitoyl cysteine). An interacts with SPRY1, SPRY2, and SPRY4 region spans residues 149–160; sequence SIYVHTFCDPFF. The interacts with SPRY1, SPRY2, SPRY3 and SPRY4 stretch occupies residues 167 to 178; that stretch reads FSNIRINMQKET.

Belongs to the caveolin family. In terms of assembly, homooligomer. Interacts with BMX, BTK, GLIPR2, NOSTRIN, SNAP25 and STX1A. Interacts with PACSIN2; this interaction induces membrane tubulation. Interacts (via the N-terminus) with DPP4; the interaction is direct. Interacts with SLC7A9. Interacts with CTNNB1, CDH1 and JUP. Interacts with TGFBR1. Interacts with CAVIN3 (via leucine-zipper domain) in a cholesterol-sensitive manner. Interacts with CAVIN1. Interacts with EHD2 in a cholesterol-dependent manner. Forms a ternary complex with UBXN6 and VCP; mediates CAV1 targeting to lysosomes for degradation. Interacts with ABCG1; this interaction regulates ABCG1-mediated cholesterol efflux. Interacts with NEU3; this interaction enhances NEU3 sialidase activity within caveola. Interacts (via C-terminus) with SPRY1, SPRY2 (via C-terminus), SPRY3, and SPRY4. Interacts with IGFBP5; this interaction allows trafficking of IGFBP5 from the plasma membrane to the nucleus. Post-translationally, phosphorylation of isoform Beta on serine residues is constitutive. Phosphorylated at Tyr-14 by ABL1 in response to oxidative stress. In terms of processing, ubiquitinated. Undergo monoubiquitination and multi- and/or polyubiquitination. Monoubiquitination of N-terminal lysines promotes integration in a ternary complex with UBXN6 and VCP which promotes oligomeric CAV1 targeting to lysosomes for degradation. Ubiquitinated by ZNRF1; leading to degradation and modulation of the TLR4-mediated immune response.

It is found in the golgi apparatus membrane. Its subcellular location is the cell membrane. The protein resides in the membrane. The protein localises to the caveola. It localises to the membrane raft. It is found in the golgi apparatus. Its subcellular location is the trans-Golgi network. In terms of biological role, may act as a scaffolding protein within caveolar membranes. Forms a stable heterooligomeric complex with CAV2 that targets to lipid rafts and drives caveolae formation. Mediates the recruitment of CAVIN proteins (CAVIN1/2/3/4) to the caveolae. Interacts directly with G-protein alpha subunits and can functionally regulate their activity. Involved in the costimulatory signal essential for T-cell receptor (TCR)-mediated T-cell activation. Its binding to DPP4 induces T-cell proliferation and NF-kappa-B activation in a T-cell receptor/CD3-dependent manner. Recruits CTNNB1 to caveolar membranes and may regulate CTNNB1-mediated signaling through the Wnt pathway. Negatively regulates TGFB1-mediated activation of SMAD2/3 by mediating the internalization of TGFBR1 from membrane rafts leading to its subsequent degradation. Binds 20(S)-hydroxycholesterol (20(S)-OHC). The sequence is that of Caveolin-1 (CAV1) from Canis lupus familiaris (Dog).